Here is a 207-residue protein sequence, read N- to C-terminus: Large ribosomal subunit protein uL3c (207 aa).

A disordered region spans residues 129 to 148; the sequence is TRGPMTHGSKNHRAPGSIGM.

The protein belongs to the universal ribosomal protein uL3 family. As to quaternary structure, part of the 50S ribosomal subunit.

The protein localises to the plastid. It localises to the chloroplast. One of the primary rRNA binding proteins, it binds directly near the 3'-end of the 23S rRNA, where it nucleates assembly of the 50S subunit. This is Large ribosomal subunit protein uL3c (rpl3) from Phaeodactylum tricornutum (strain CCAP 1055/1).